The sequence spans 228 residues: MANELTWHDVLAEEKQQPYFLNTLQTVASERQSGVTIYPPQKDVFNAFRFTELGDVKVVILGQDPYHGPGQAHGLAFSVRPGIATPPSLLNMYKELENTIPGFTRPNHGYLESWARQGVLLLNTVLTVRAGQAHSHASLGWETFTDKVISLINQHREGVVFLLWGSHAQKKGAIIDXQRHHVLKAPHPSPLSAHRGFFGCNHFVLANQWLEQRGETPIDWMPVLPAES.

Asp64 acts as the Proton acceptor in catalysis.

This sequence belongs to the uracil-DNA glycosylase (UDG) superfamily. UNG family. As to quaternary structure, monomer.

It is found in the cytoplasm. The catalysed reaction is Hydrolyzes single-stranded DNA or mismatched double-stranded DNA and polynucleotides, releasing free uracil.. Excises uracil residues from the DNA which can arise as a result of misincorporation of dUMP residues by DNA polymerase or due to deamination of cytosine. The polypeptide is Uracil-DNA glycosylase (Escherichia coli O6:H1 (strain CFT073 / ATCC 700928 / UPEC)).